A 365-amino-acid polypeptide reads, in one-letter code: Nudix hydrolase 24, chloroplastic (365 aa).

Residues 1-30 (MASAFCSLCPTPTSLFSSHALIPTLQWRSS) constitute a chloroplast transit peptide. Residues 196–337 (GYAIHVNGYV…KDSCSLVIID (142 aa)) form the Nudix hydrolase domain. A Nudix box motif is present at residues 235-256 (GGLPHGISVCENLVKECEEEAG). Glu250 and Glu254 together coordinate Mg(2+).

This sequence belongs to the Nudix hydrolase family. The cofactor is Mg(2+). It depends on Mn(2+) as a cofactor. Expressed in leaves.

The protein resides in the plastid. The protein localises to the chloroplast. Functionally, probably mediates the hydrolysis of some nucleoside diphosphate derivatives. This chain is Nudix hydrolase 24, chloroplastic (NUDT24), found in Arabidopsis thaliana (Mouse-ear cress).